The chain runs to 261 residues: Cytochrome c oxidase subunit 3 (261 aa).

The Mitochondrial matrix segment spans residues 1–15 (MAHQAHAYHMVDPSP). The chain crosses the membrane as a helical span at residues 16–34 (WPLTGAVAALLMSSGLAIW). Residues 35 to 40 (FHLHSM) are Mitochondrial intermembrane-facing. A helical membrane pass occupies residues 41–66 (TLIVLGMILLILTMIQWWRDIIREGT). The Mitochondrial matrix segment spans residues 67–72 (FQGHHT). A helical transmembrane segment spans residues 73 to 105 (PPVQKGLRYGMILFITSEVFFFLGFFWAFYHSS). Residues 106-128 (LAPTPELGGCWPPTGLTTLDPFE) are Mitochondrial intermembrane-facing. A helical membrane pass occupies residues 129–152 (VPLLNTAVLLASGVTVTWAHHSLM). Topologically, residues 153-155 (EGE) are mitochondrial matrix. Residues 156-183 (RKQAIQSLALTILLGLYFTALQAMEYYE) form a helical membrane-spanning segment. Over 184–190 (APFTIAD) the chain is Mitochondrial intermembrane. Residues 191 to 223 (GVYGSTFFVATGFHGLHVIIGSTFLAVCLLRQV) form a helical membrane-spanning segment. Topologically, residues 224-232 (LFHFTSDHH) are mitochondrial matrix. Residues 233 to 256 (FGFEAAAWYWHFVDVVWLFLYVSI) form a helical membrane-spanning segment. Residues 257–261 (YWWGS) lie on the Mitochondrial intermembrane side of the membrane.

The protein belongs to the cytochrome c oxidase subunit 3 family. As to quaternary structure, component of the cytochrome c oxidase (complex IV, CIV), a multisubunit enzyme composed of 14 subunits. The complex is composed of a catalytic core of 3 subunits MT-CO1, MT-CO2 and MT-CO3, encoded in the mitochondrial DNA, and 11 supernumerary subunits COX4I, COX5A, COX5B, COX6A, COX6B, COX6C, COX7A, COX7B, COX7C, COX8 and NDUFA4, which are encoded in the nuclear genome. The complex exists as a monomer or a dimer and forms supercomplexes (SCs) in the inner mitochondrial membrane with NADH-ubiquinone oxidoreductase (complex I, CI) and ubiquinol-cytochrome c oxidoreductase (cytochrome b-c1 complex, complex III, CIII), resulting in different assemblies (supercomplex SCI(1)III(2)IV(1) and megacomplex MCI(2)III(2)IV(2)).

The protein localises to the mitochondrion inner membrane. The enzyme catalyses 4 Fe(II)-[cytochrome c] + O2 + 8 H(+)(in) = 4 Fe(III)-[cytochrome c] + 2 H2O + 4 H(+)(out). Its function is as follows. Component of the cytochrome c oxidase, the last enzyme in the mitochondrial electron transport chain which drives oxidative phosphorylation. The respiratory chain contains 3 multisubunit complexes succinate dehydrogenase (complex II, CII), ubiquinol-cytochrome c oxidoreductase (cytochrome b-c1 complex, complex III, CIII) and cytochrome c oxidase (complex IV, CIV), that cooperate to transfer electrons derived from NADH and succinate to molecular oxygen, creating an electrochemical gradient over the inner membrane that drives transmembrane transport and the ATP synthase. Cytochrome c oxidase is the component of the respiratory chain that catalyzes the reduction of oxygen to water. Electrons originating from reduced cytochrome c in the intermembrane space (IMS) are transferred via the dinuclear copper A center (CU(A)) of subunit 2 and heme A of subunit 1 to the active site in subunit 1, a binuclear center (BNC) formed by heme A3 and copper B (CU(B)). The BNC reduces molecular oxygen to 2 water molecules using 4 electrons from cytochrome c in the IMS and 4 protons from the mitochondrial matrix. This chain is Cytochrome c oxidase subunit 3 (mt-co3), found in Danio rerio (Zebrafish).